A 156-amino-acid chain; its full sequence is rRNA methyltransferase (156 aa).

Modifies 16S rRNA so making ribosomes resistant to certain aminoglycosides. This chain is rRNA methyltransferase (kamC), found in Saccharopolyspora hirsuta.